Reading from the N-terminus, the 722-residue chain is D-galactosyl-beta-1-&gt;4-L-rhamnose phosphorylase (722 aa).

The active-site Proton donor is Asp-319.

It belongs to the glycoside hydrolase 112 family.

It catalyses the reaction beta-D-galactosyl-(1-&gt;4)-L-rhamnose + phosphate = alpha-D-galactose 1-phosphate + L-rhamnopyranose. Functionally, reversibly phosphorolyzes beta-D-galactosyl-(1-&gt;4)-L-rhamnose to form alpha-D-galactose 1-phosphate and L-rhamnose. Does not phosphorolyze galacto-N-biose or lacto-N-biose. In the reverse reaction, has the highest activity toward L-rhamnose, also has activity toward L-mannose, and low activity toward L-lyxose, D-glucose, 2-deoxy-D-glucose and D-galactose. The polypeptide is D-galactosyl-beta-1-&gt;4-L-rhamnose phosphorylase (Lachnoclostridium phytofermentans (strain ATCC 700394 / DSM 18823 / ISDg) (Clostridium phytofermentans)).